The chain runs to 125 residues: MARVKRGVTSHAKHKKVLKAAKGYYGRRKNTIRIAKQAVEKGLQYAYRDRKNRKRSFRALWIQRLNAAVREHGLTYSRFIDGLAKAGIVVDRKALSELAIHEPAAFSAVVEKAKAALPAETAKAA.

It belongs to the bacterial ribosomal protein bL20 family.

Functionally, binds directly to 23S ribosomal RNA and is necessary for the in vitro assembly process of the 50S ribosomal subunit. It is not involved in the protein synthesizing functions of that subunit. This Methylobacterium nodulans (strain LMG 21967 / CNCM I-2342 / ORS 2060) protein is Large ribosomal subunit protein bL20.